We begin with the raw amino-acid sequence, 117 residues long: Large ribosomal subunit protein uL18 (117 aa).

Belongs to the universal ribosomal protein uL18 family. In terms of assembly, part of the 50S ribosomal subunit; part of the 5S rRNA/L5/L18/L25 subcomplex. Contacts the 5S and 23S rRNAs.

Its function is as follows. This is one of the proteins that bind and probably mediate the attachment of the 5S RNA into the large ribosomal subunit, where it forms part of the central protuberance. This chain is Large ribosomal subunit protein uL18, found in Pectobacterium carotovorum subsp. carotovorum (strain PC1).